The following is a 290-amino-acid chain: tRNA dimethylallyltransferase (290 aa).

9 to 16 (GPTASGKT) contributes to the ATP binding site. Residue 11-16 (TASGKT) participates in substrate binding. Positions 34 to 37 (DSTQ) are interaction with substrate tRNA.

Belongs to the IPP transferase family. As to quaternary structure, monomer. It depends on Mg(2+) as a cofactor.

It carries out the reaction adenosine(37) in tRNA + dimethylallyl diphosphate = N(6)-dimethylallyladenosine(37) in tRNA + diphosphate. Catalyzes the transfer of a dimethylallyl group onto the adenine at position 37 in tRNAs that read codons beginning with uridine, leading to the formation of N6-(dimethylallyl)adenosine (i(6)A). This Phytoplasma australiense protein is tRNA dimethylallyltransferase.